The primary structure comprises 1132 residues: Ubiquitin carboxyl-terminal hydrolase 43 (1132 aa).

The disordered stretch occupies residues 1–103 (MDPGVGNALG…GARPPGAQGL (103 aa)). Residues 17–28 (RPRRRRSLRRLL) show a composition bias toward basic residues. 2 stretches are compositionally biased toward low complexity: residues 29 to 44 (NRFL…SGDS) and 63 to 78 (FACA…GSPG). The USP domain occupies 101–710 (QGLKNHGNTC…GAYILFYQKR (610 aa)). Cys-110 acts as the Nucleophile in catalysis. His-668 functions as the Proton acceptor in the catalytic mechanism. Arg-746 is modified (asymmetric dimethylarginine). 4 disordered regions span residues 839–891 (RRRP…TGVP), 935–1008 (TVMP…RGQG), 1024–1044 (RTVR…SDRL), and 1057–1106 (RESP…GEQI). The segment covering 941–950 (GDEKPARPEG) has biased composition (basic and acidic residues). Low complexity predominate over residues 958–967 (GSSQVGSQSS). A Phosphoserine modification is found at Ser-970. Residues 994-1006 (AAMEERAPDKDRG) show a composition bias toward basic and acidic residues.

Belongs to the peptidase C19 family.

It carries out the reaction Thiol-dependent hydrolysis of ester, thioester, amide, peptide and isopeptide bonds formed by the C-terminal Gly of ubiquitin (a 76-residue protein attached to proteins as an intracellular targeting signal).. In terms of biological role, may recognize and hydrolyze the peptide bond at the C-terminal Gly of ubiquitin. Involved in the processing of poly-ubiquitin precursors as well as that of ubiquitinated proteins. This chain is Ubiquitin carboxyl-terminal hydrolase 43 (Usp43), found in Mus musculus (Mouse).